The following is a 226-amino-acid chain: Phosphoribosyl-dephospho-CoA transferase (226 aa).

Active-site residues include Asp-148 and Asp-150.

It belongs to the MdcG family.

It carries out the reaction apo-[malonate decarboxylase ACP] + 2'-(5''-triphospho-alpha-D-ribosyl)-3'-dephospho-CoA = holo-[malonate decarboxylase ACP] + diphosphate. Its function is as follows. Transfers 2'-(5-triphosphoribosyl)-3'-dephosphocoenzyme-A to the apo-[acyl-carrier-protein] of the malonate decarboxylase to yield holo-[acyl-carrier-protein]. This is Phosphoribosyl-dephospho-CoA transferase from Bradyrhizobium diazoefficiens (strain JCM 10833 / BCRC 13528 / IAM 13628 / NBRC 14792 / USDA 110).